Consider the following 476-residue polypeptide: Glycogen synthase (476 aa).

K15 lines the ADP-alpha-D-glucose pocket.

It belongs to the glycosyltransferase 1 family. Bacterial/plant glycogen synthase subfamily.

It catalyses the reaction [(1-&gt;4)-alpha-D-glucosyl](n) + ADP-alpha-D-glucose = [(1-&gt;4)-alpha-D-glucosyl](n+1) + ADP + H(+). It functions in the pathway glycan biosynthesis; glycogen biosynthesis. In terms of biological role, synthesizes alpha-1,4-glucan chains using ADP-glucose. This chain is Glycogen synthase, found in Streptococcus gordonii (strain Challis / ATCC 35105 / BCRC 15272 / CH1 / DL1 / V288).